The chain runs to 355 residues: Protein RecA (355 aa).

An ATP-binding site is contributed by 67–74; it reads GPESSGKT. Residues 335–355 are disordered; it reads NSLVSDVESEDEGASESNEEF. Residues 341 to 355 show a composition bias toward acidic residues; that stretch reads VESEDEGASESNEEF.

Belongs to the RecA family.

The protein localises to the cytoplasm. In terms of biological role, can catalyze the hydrolysis of ATP in the presence of single-stranded DNA, the ATP-dependent uptake of single-stranded DNA by duplex DNA, and the ATP-dependent hybridization of homologous single-stranded DNAs. It interacts with LexA causing its activation and leading to its autocatalytic cleavage. This is Protein RecA from Sodalis glossinidius.